Here is a 199-residue protein sequence, read N- to C-terminus: Transcriptional regulatory protein EntR (199 aa).

The Response regulatory domain occupies 3-124; that stretch reads KILVIDRCHF…TLSHTIQEAL (122 aa). Position 8 is a 4-aspartylphosphate (Asp-8). In terms of domain architecture, HTH luxR-type spans 133-198; the sequence is PKNATPLLTP…SPFLSLPGKG (66 aa). The segment at residues 157–176 is a DNA-binding region (H-T-H motif); it reads NNAIAAALSIHGKTVYTYKR.

May serve to repress the entericidin locus in C.freundii. The polypeptide is Transcriptional regulatory protein EntR (ecnR) (Citrobacter freundii).